The primary structure comprises 158 residues: Cathelicidin-6 (158 aa).

Positions 1 to 29 (METQRASLSLGRWSLWLLLLGLALPSASA) are cleaved as a signal peptide. A propeptide spanning residues 30 to 131 (QALSYREAVL…NVTCEELQSV (102 aa)) is cleaved from the precursor. Cystine bridges form between Cys-86–Cys-97 and Cys-108–Cys-125.

Belongs to the cathelicidin family.

Its subcellular location is the secreted. Functionally, exerts a potent antimicrobial activity against Gram-negative and Gram-positive bacteria, including methicillin-resistant Staphylococcus aureus, and fungi. This is Cathelicidin-6 (CATHL6) from Bos taurus (Bovine).